A 965-amino-acid polypeptide reads, in one-letter code: Translation initiation factor IF-2 (965 aa).

The disordered stretch occupies residues 94–375 (RTFVRRDEAA…RGKHQESTTF (282 aa)). Residues 104 to 115 (EQAAEATGNGQE) show a composition bias toward low complexity. Over residues 121–177 (ELQRREEEARHEAELLEKQAQELKARQEQLAREEAERQAREQAAEAERRRAEEEAAK) the composition is skewed to basic and acidic residues. Residues 181 to 191 (AAVAEAAAAAR) are compositionally biased toward low complexity. Residues 192-253 (EQAEQERASQ…KAEAEARAIR (62 aa)) show a composition bias toward basic and acidic residues. Residues 267–276 (PEPPPKPAEA) show a composition bias toward pro residues. The segment covering 303 to 320 (KKPAPAAAAQPAATTQPA) has biased composition (low complexity). Residues 351 to 364 (TSGGVDRGWRGGPK) show a composition bias toward gly residues. A tr-type G domain is found at 465–634 (PRPPVVTVMG…LLQAEVLELK (170 aa)). Residues 474-481 (GHVDHGKT) are G1. Residue 474–481 (GHVDHGKT) participates in GTP binding. The interval 499–503 (GITQH) is G2. Positions 520–523 (DTPG) are G3. Residues 520–524 (DTPGH) and 574–577 (NKID) each bind GTP. The G4 stretch occupies residues 574–577 (NKID). Positions 610-612 (SAK) are G5.

The protein belongs to the TRAFAC class translation factor GTPase superfamily. Classic translation factor GTPase family. IF-2 subfamily.

It localises to the cytoplasm. Its function is as follows. One of the essential components for the initiation of protein synthesis. Protects formylmethionyl-tRNA from spontaneous hydrolysis and promotes its binding to the 30S ribosomal subunits. Also involved in the hydrolysis of GTP during the formation of the 70S ribosomal complex. In Paraburkholderia phymatum (strain DSM 17167 / CIP 108236 / LMG 21445 / STM815) (Burkholderia phymatum), this protein is Translation initiation factor IF-2.